A 388-amino-acid chain; its full sequence is Flavin-dependent monooxygenase (388 aa).

FAD-binding positions include 26–27 (PV) and 45–48 (YERD). R54 is an NADPH binding site. FAD-binding residues include D61, R117, and L139. Substrate-binding residues include Q192 and R213. FAD is bound by residues D311 and 321 to 324 (GQGV).

This sequence belongs to the aromatic-ring hydroxylase family. TetX subfamily. In terms of assembly, monomer. Requires FAD as cofactor.

It localises to the cytoplasm. It carries out the reaction a tetracycline + NADPH + O2 + H(+) = an 11a-hydroxytetracycline + NADP(+) + H2O. The catalysed reaction is tetracycline + NADPH + O2 + H(+) = 11a-hydroxytetracycline + NADP(+) + H2O. The enzyme catalyses tigecycline + NADPH + O2 + H(+) = 11a-hydroxytigecycline + NADP(+) + H2O. It catalyses the reaction oxytetracycline + NADPH + O2 + H(+) = 11a-hydroxy-oxytetracycline + NADP(+) + H2O. Its activity is regulated as follows. Anhydrotetracycline, a poor substrate, prevents tetracycline degradation in vitro. Functionally, an FAD-requiring monooxygenase active on tetracycline antibiotic derivatives, which leads to their inactivation. Hydroxylates carbon 11a of oxytetracycline and tigecycline. Acts on many tetracycline analogs (chlorotetracycline, demeclocycline, doxycycline, minocycline, oxytetracyclinee), probably by monooxygenization. Tigecycline, a new generation tetracycline antibiotic, is rendered less effective against E.coli by this monooxygenation, is much weaker at inhibiting translation in vitro and binds Mg(2+) considerably less well. Expression in E.coli BW25113 reduces its growth rate about 5%. The reaction probably proceeds by FAD reduction by NADPH and, second, hydroxylation of antibiotic in a ping-pong mechanism. Degrades chlortetracycline, probably by monooxygenation. Slowly oxidizes anhydrotetracycline, the final substrate in tetracycline biosynthesis. This is Flavin-dependent monooxygenase from Bacteroides thetaiotaomicron.